The primary structure comprises 535 residues: CTP synthase (535 aa).

The amidoligase domain stretch occupies residues 1–267; that stretch reads MTKYIFVTGG…DQIVLDHFGV (267 aa). Ser13 contacts CTP. Residue Ser13 participates in UTP binding. 14–19 is a binding site for ATP; the sequence is SLGKGI. Tyr54 serves as a coordination point for L-glutamine. An ATP-binding site is contributed by Asp71. Mg(2+) contacts are provided by Asp71 and Glu141. CTP-binding positions include 148–150, 188–193, and Lys224; these read DIE and KTKPTQ. Residues 188–193 and Lys224 each bind UTP; that span reads KTKPTQ. The 244-residue stretch at 292–535 folds into the Glutamine amidotransferase type-1 domain; sequence KIALVGKYVA…VAAASREVKD (244 aa). Gly354 is a binding site for L-glutamine. The Nucleophile; for glutamine hydrolysis role is filled by Cys381. L-glutamine-binding positions include 382–385, Glu405, and Arg463; that span reads LGMQ. Catalysis depends on residues His508 and Glu510.

It belongs to the CTP synthase family. As to quaternary structure, homotetramer.

The catalysed reaction is UTP + L-glutamine + ATP + H2O = CTP + L-glutamate + ADP + phosphate + 2 H(+). It catalyses the reaction L-glutamine + H2O = L-glutamate + NH4(+). The enzyme catalyses UTP + NH4(+) + ATP = CTP + ADP + phosphate + 2 H(+). Its pathway is pyrimidine metabolism; CTP biosynthesis via de novo pathway; CTP from UDP: step 2/2. Allosterically activated by GTP, when glutamine is the substrate; GTP has no effect on the reaction when ammonia is the substrate. The allosteric effector GTP functions by stabilizing the protein conformation that binds the tetrahedral intermediate(s) formed during glutamine hydrolysis. Inhibited by the product CTP, via allosteric rather than competitive inhibition. Its function is as follows. Catalyzes the ATP-dependent amination of UTP to CTP with either L-glutamine or ammonia as the source of nitrogen. Regulates intracellular CTP levels through interactions with the four ribonucleotide triphosphates. This chain is CTP synthase, found in Levilactobacillus brevis (strain ATCC 367 / BCRC 12310 / CIP 105137 / JCM 1170 / LMG 11437 / NCIMB 947 / NCTC 947) (Lactobacillus brevis).